The sequence spans 371 residues: tRNA-specific 2-thiouridylase MnmA (371 aa).

Residues 24–31 (AMSGGVDS) and Leu50 contribute to the ATP site. Cys120 serves as the catalytic Nucleophile. The cysteines at positions 120 and 216 are disulfide-linked. Gly144 contacts ATP. The segment at 166–168 (KDQ) is interaction with tRNA. The active-site Cysteine persulfide intermediate is the Cys216.

The protein belongs to the MnmA/TRMU family.

Its subcellular location is the cytoplasm. The catalysed reaction is S-sulfanyl-L-cysteinyl-[protein] + uridine(34) in tRNA + AH2 + ATP = 2-thiouridine(34) in tRNA + L-cysteinyl-[protein] + A + AMP + diphosphate + H(+). In terms of biological role, catalyzes the 2-thiolation of uridine at the wobble position (U34) of tRNA, leading to the formation of s(2)U34. In Wolbachia sp. subsp. Brugia malayi (strain TRS), this protein is tRNA-specific 2-thiouridylase MnmA.